The primary structure comprises 262 residues: 4-hydroxy-2-oxo-heptane-1,7-dioate aldolase (262 aa).

His45 functions as the Proton acceptor in the catalytic mechanism. Gln147 lines the substrate pocket. Residue Glu149 participates in a divalent metal cation binding. Substrate contacts are provided by Ala174 and Asp175. Asp175 lines the a divalent metal cation pocket.

The protein belongs to the HpcH/HpaI aldolase family. In terms of assembly, homohexamer; trimer of dimers. A divalent metal cation is required as a cofactor.

It carries out the reaction 4-hydroxy-2-oxoheptanedioate = succinate semialdehyde + pyruvate. The protein operates within aromatic compound metabolism; 4-hydroxyphenylacetate degradation; pyruvate and succinate semialdehyde from 4-hydroxyphenylacetate: step 7/7. In terms of biological role, catalyzes the reversible retro-aldol cleavage of 4-hydroxy-2-ketoheptane-1,7-dioate (HKHD) to pyruvate and succinic semialdehyde. This Shigella boydii serotype 18 (strain CDC 3083-94 / BS512) protein is 4-hydroxy-2-oxo-heptane-1,7-dioate aldolase.